We begin with the raw amino-acid sequence, 218 residues long: MKIEKASHISQPVQLSTCTLIDTYPGHQGSMNNKEVELYGGAITTVVPPGFIDASTLREVPDTQEVYVNSRRDEEEFEDGLATNESIIVDLLETVDKSDLKEAWQFHVEDLTELNGTTKWEALQEDTVQQGTKFTGLVMEVANKWGKPDLAQTVVIGVALIRLTQFDTDVVISINVPLTKEEASQASNKELPARCHAVYQLLQEMVRKFHVVDTSLFA.

This sequence belongs to the MOG1 family. As to quaternary structure, interacts with GSP1.

Its subcellular location is the nucleus. Functionally, involved in the Ran-GTPase system for nuclear protein import and poly(A)+ mRNA export. This Saccharomyces cerevisiae (strain ATCC 204508 / S288c) (Baker's yeast) protein is Nuclear import protein MOG1 (MOG1).